The following is a 341-amino-acid chain: Biotin synthase (341 aa).

One can recognise a Radical SAM core domain in the interval 39–263 (EQVQLCTLLS…VAVARITMPL (225 aa)). The [4Fe-4S] cluster site is built by C54, C58, and C61. [2Fe-2S] cluster is bound by residues C98, C129, C189, and R267.

This sequence belongs to the radical SAM superfamily. Biotin synthase family. As to quaternary structure, homodimer. [4Fe-4S] cluster is required as a cofactor. [2Fe-2S] cluster serves as cofactor.

The enzyme catalyses (4R,5S)-dethiobiotin + (sulfur carrier)-SH + 2 reduced [2Fe-2S]-[ferredoxin] + 2 S-adenosyl-L-methionine = (sulfur carrier)-H + biotin + 2 5'-deoxyadenosine + 2 L-methionine + 2 oxidized [2Fe-2S]-[ferredoxin]. It participates in cofactor biosynthesis; biotin biosynthesis; biotin from 7,8-diaminononanoate: step 2/2. In terms of biological role, catalyzes the conversion of dethiobiotin (DTB) to biotin by the insertion of a sulfur atom into dethiobiotin via a radical-based mechanism. This Erythrobacter litoralis (strain HTCC2594) protein is Biotin synthase.